A 304-amino-acid chain; its full sequence is tRNA pseudouridine synthase B (304 aa).

The active-site Nucleophile is the D38.

Belongs to the pseudouridine synthase TruB family. Type 1 subfamily.

The enzyme catalyses uridine(55) in tRNA = pseudouridine(55) in tRNA. Responsible for synthesis of pseudouridine from uracil-55 in the psi GC loop of transfer RNAs. The protein is tRNA pseudouridine synthase B of Listeria innocua serovar 6a (strain ATCC BAA-680 / CLIP 11262).